The sequence spans 125 residues: Small ribosomal subunit protein eS8 (125 aa).

The interval 1 to 30 (MTIFQGRATRKPSGGKLRPNHSKRRYELGR) is disordered.

Belongs to the eukaryotic ribosomal protein eS8 family. As to quaternary structure, part of the 30S ribosomal subunit.

The polypeptide is Small ribosomal subunit protein eS8 (Picrophilus torridus (strain ATCC 700027 / DSM 9790 / JCM 10055 / NBRC 100828 / KAW 2/3)).